Here is a 160-residue protein sequence, read N- to C-terminus: Protein cornichon homolog 3 (160 aa).

Topologically, residues 1 to 10 (MAFTFAAFCY) are cytoplasmic. Residues 11–31 (MLSLVLCAALIFFAIWHIIAF) form a helical membrane-spanning segment. Topologically, residues 32–72 (DELRTDFKSPIDQCNPVHARERLRNIERICFLLRKLVLPEY) are lumenal. A helical membrane pass occupies residues 73–93 (SIHSLFCVMFLCAQEWLTLGL). At 94–138 (NVPLLFYHFWRYFHCPADSSELAYDPPVVMNADTLSYCQKEAWCK) the chain is on the cytoplasmic side. A helical membrane pass occupies residues 139–159 (LAFYLLSFFYYLYCMIYTLVS). Ser160 is a topological domain (lumenal).

The protein belongs to the cornichon family. In terms of assembly, acts as an auxiliary subunit for AMPA-selective glutamate receptors (AMPARs). Found in a complex with GRIA1, GRIA2, GRIA3, GRIA4, CNIH2, CACNG2, CACNG3, CACNG4, CACNG5, CACNG7 and CACNG8. In terms of tissue distribution, brain. Expressed in the neocortex, hippocampal formation, and cerebellum (at protein level).

It is found in the postsynaptic cell membrane. Functionally, regulates the trafficking and gating properties of AMPA-selective glutamate receptors (AMPARs). Promotes their targeting to the cell membrane and synapses and modulates their gating properties by regulating their rates of activation, deactivation and desensitization. The sequence is that of Protein cornichon homolog 3 (Cnih3) from Rattus norvegicus (Rat).